A 136-amino-acid polypeptide reads, in one-letter code: Histone H3 (136 aa).

Residues 1–43 are disordered; sequence MARTKQTARKSTGGKAPRKQLASKAARKSAPSTGGVKKPHRYK. Residue K5 is modified to N6,N6,N6-trimethyllysine; alternate. An N6,N6-dimethyllysine; alternate modification is found at K5. Residues K5 and K10 each carry the N6-methyllysine; alternate modification. K10 carries the post-translational modification N6-acetyllysine; alternate. Residue S11 is modified to Phosphoserine. K15 carries the N6,N6-dimethyllysine; alternate modification. N6-methyllysine; alternate is present on residues K15, K19, K24, K28, and K37. 5 positions are modified to N6-acetyllysine; alternate: K15, K19, K24, K28, and K37. K28 and K37 each carry N6,N6,N6-trimethyllysine; alternate. N6,N6-dimethyllysine; alternate occurs at positions 28 and 37. 2 positions are modified to N6-acetyllysine: K57 and K65. K80 carries the N6,N6,N6-trimethyllysine; alternate modification. Residue K80 is modified to N6,N6-dimethyllysine; alternate. K80 carries the N6-methyllysine; alternate modification.

This sequence belongs to the histone H3 family. As to quaternary structure, the nucleosome is a histone octamer containing two molecules each of H2A, H2B, H3 and H4 assembled in one H3-H4 heterotetramer and two H2A-H2B heterodimers. The octamer wraps approximately 147 bp of DNA. Post-translationally, phosphorylated by IPL1 to form H3S10ph. H3S10ph promotes subsequent H3K14ac formation by GCN5 and is required for transcriptional activation through TBP recruitment to the promoters. Mono-, di- and trimethylated by the COMPASS complex to form H3K4me1/2/3. H3K4me activates gene expression by regulating transcription elongation and plays a role in telomere length maintenance. H3K4me enrichment correlates with transcription levels, and occurs in a 5' to 3' gradient with H3K4me3 enrichment at the 5'-end of genes, shifting to H3K4me2 and then H3K4me1. Methylated by SET2 to form H3K36me. H3K36me represses gene expression. Methylated by DOT1 to form H3K79me. H3K79me is required for association of SIR proteins with telomeric regions and for telomeric silencing. The COMPASS-mediated formation of H3K4me2/3 and the DOT1-mediated formation of H3K79me require H2BK123ub1. In terms of processing, acetylation of histone H3 leads to transcriptional activation. H3K14ac formation by GCN5 is promoted by H3S10ph. H3K14ac can also be formed by ESA1. H3K56ac formation occurs predominantly in newly synthesized H3 molecules during G1, S and G2/M of the cell cycle and may be involved in DNA repair.

Its subcellular location is the nucleus. It localises to the chromosome. Functionally, core component of nucleosome. Nucleosomes wrap and compact DNA into chromatin, limiting DNA accessibility to the cellular machineries which require DNA as a template. Histones thereby play a central role in transcription regulation, DNA repair, DNA replication and chromosomal stability. DNA accessibility is regulated via a complex set of post-translational modifications of histones, also called histone code, and nucleosome remodeling. In Candida glabrata (strain ATCC 2001 / BCRC 20586 / JCM 3761 / NBRC 0622 / NRRL Y-65 / CBS 138) (Yeast), this protein is Histone H3 (HHT1).